Consider the following 187-residue polypeptide: Meiotically up-regulated gene 155 protein (187 aa).

Residues 1-24 (MRPTSGCSKDDTIQKQNRRHNTVD) form a disordered region. The next 2 membrane-spanning stretches (helical) occupy residues 83-105 (IISY…PFSH) and 163-183 (VMLT…LFIF).

The protein resides in the cytoplasm. Its subcellular location is the nucleus membrane. Functionally, has a role in meiosis. In Schizosaccharomyces pombe (strain 972 / ATCC 24843) (Fission yeast), this protein is Meiotically up-regulated gene 155 protein (mug155).